Consider the following 77-residue polypeptide: U14-theraphotoxin-Cg1a 2 (77 aa).

An N-terminal signal peptide occupies residues 1-21 (MKTSVLLVILGIAAITVQCTA). Residues 22–49 (SESVKQDSLRTFVDAVLGWNAEMASEAR) constitute a propeptide that is removed on maturation. 3 disulfides stabilise this stretch: C50-C64, C57-C69, and C63-C75. K77 carries the lysine amide modification.

The protein belongs to the neurotoxin 10 (Hwtx-1) family. 65 (Jztx-21) subfamily. In terms of tissue distribution, expressed by the venom gland.

The protein resides in the secreted. Functionally, probable ion channel inhibitor. The protein is U14-theraphotoxin-Cg1a 2 of Chilobrachys guangxiensis (Chinese earth tiger tarantula).